The primary structure comprises 189 residues: Elongation factor P (189 aa).

The protein belongs to the elongation factor P family.

It is found in the cytoplasm. It participates in protein biosynthesis; polypeptide chain elongation. Involved in peptide bond synthesis. Stimulates efficient translation and peptide-bond synthesis on native or reconstituted 70S ribosomes in vitro. Probably functions indirectly by altering the affinity of the ribosome for aminoacyl-tRNA, thus increasing their reactivity as acceptors for peptidyl transferase. The polypeptide is Elongation factor P (Pseudomonas fluorescens (strain Pf0-1)).